Reading from the N-terminus, the 445-residue chain is RCC1 domain-containing protein RUG3, mitochondrial (445 aa).

The transit peptide at 1–22 directs the protein to the mitochondrion; the sequence is MAALSHRLRSFTRRFSSTRTTQ. 7 RCC1 repeats span residues 47–101, 118–169, 171–221, 222–279, 280–331, 333–383, and 385–442; these read TLQL…DSSS, DGDL…ALTH, GDVF…AITE, SGEL…ALTK, EGQL…ALTE, GKVL…AITD, and GELW…CLVS.

Interacts with ATM. Mostly expressed in roots and rosette leaves of young seedlings, and, to a lower extent, in the flowers and siliques of mature plants. Preferentially expressed in the vascular tissues.

It localises to the mitochondrion. In terms of biological role, regulates DNA damage response (DDR) synergistically with ATM. Together with ATM, involved in the splicing of the ND2/NAD2 mRNA. Required for the accumulation of mitochondrial respiratory chain complex I. Negative regulator of plant responses to abscisic acid (ABA). May have a pivotal role in vegetative growth and the phase transition from vegetative to reproductive growth. The chain is RCC1 domain-containing protein RUG3, mitochondrial from Arabidopsis thaliana (Mouse-ear cress).